A 472-amino-acid polypeptide reads, in one-letter code: H(+)/Cl(-) exchange transporter ClcA (472 aa).

Residues 1 to 32 (MKAETPSFEAHQFVRVRRGDAVRRLIQRDKTP) are Cytoplasmic-facing. Residues 33–69 (LAVLFMAAVVGTLAGLVGVAFEKSVNWVQNQRIGALA) form a helical membrane-spanning segment. Topologically, residues 70–76 (QVADHWY) are periplasmic. A helical membrane pass occupies residues 77-100 (LVWPLAFILSALLAMVGYFLVRRF). Residues 106–110 (GSGIP) carry the Selectivity filter part_1 motif. Serine 107 provides a ligand contact to chloride. The segment at residues 109–116 (IPEIEGAL) is an intramembrane region (helical). At 117–123 (EELRPVR) the chain is on the cytoplasmic side. 2 consecutive transmembrane segments (helical) span residues 124-141 (WWRV…TLGA) and 148-166 (EGPM…LDVF). Residues 146-150 (GREGP) carry the Selectivity filter part_2 motif. At 167 to 176 (RMRSPEARHT) the chain is on the cytoplasmic side. 2 intramembrane regions (helical) span residues 177 to 189 (LLAT…LSAA) and 193 to 201 (PLAGILFII). Residues 202–214 (EEMRPQFRYNLIS) are Cytoplasmic-facing. The chain crosses the membrane as a helical span at residues 215 to 232 (IKAVFTGVIMSSIVFRIF). The Periplasmic segment spans residues 233-252 (NGEAAIIEVGKLSNAPVNTL). A helical membrane pass occupies residues 253-281 (WLYLVLGMLFGCFGPLFNFLVLRTQDLFQ). Over 282 to 287 (RIHGGN) the chain is Cytoplasmic. Residues 288 to 309 (IKKWVLIGGLIGGLCGLLGLMQ) traverse the membrane as a helical segment. Over 310 to 329 (PSAVGGGFNLIPIAAAGNFS) the chain is Periplasmic. The next 2 membrane-spanning stretches (helical) occupy residues 330 to 349 (VGLL…ICFS) and 355 to 376 (GIFA…MAAI). Positions 355–359 (GIFAP) match the Selectivity filter part_3 motif. Residues isoleucine 356 and phenylalanine 357 each coordinate chloride. The Periplasmic segment spans residues 377–386 (PLFPAYHLDA). Positions 387-401 (GTFAIAGMGALLAAS) form an intramembrane region, helical. The note=Loop between two helices intramembrane region spans 402–404 (VRA). The segment at residues 405–416 (PLTGIVLVLEMT) is an intramembrane region (helical). Positions 417–421 (DNYQL) form an intramembrane region, note=Loop between two helices. A helical membrane pass occupies residues 422-438 (ILPMIITCLGATLLAQF). Residues 439–472 (LGGKPLYSTILQRTLAKQEAEQAAKAQQAPRENT) lie on the Cytoplasmic side of the membrane. Tyrosine 445 is a binding site for chloride.

It belongs to the chloride channel (TC 2.A.49) family. ClcA subfamily. In terms of assembly, homodimer.

It is found in the cell inner membrane. The catalysed reaction is 2 chloride(in) + H(+)(out) = 2 chloride(out) + H(+)(in). In terms of biological role, proton-coupled chloride transporter. Functions as antiport system and exchanges two chloride ions for 1 proton. Probably acts as an electrical shunt for an outwardly-directed proton pump that is linked to amino acid decarboxylation, as part of the extreme acid resistance (XAR) response. In Klebsiella pneumoniae subsp. pneumoniae (strain ATCC 700721 / MGH 78578), this protein is H(+)/Cl(-) exchange transporter ClcA.